Here is a 275-residue protein sequence, read N- to C-terminus: Nurim (275 aa).

The Nuclear segment spans residues 1–4 (MASV). A helical membrane pass occupies residues 5–32 (TFRDGFLCVSALITFVFVFVTGADFVRF). At 33-63 (VSFRAINHNLSGAAPLCRDSVPWSVALRDGV) the chain is on the perinuclear space side. The helical transmembrane segment at 64–85 (VQKAVAVDVLLLVVFSLQHSLL) threads the bilayer. The Nuclear segment spans residues 86 to 102 (AWTPVKRVCQSVFGVLS). Residues 103-119 (RSVYCFTTAAALQILMH) traverse the membrane as a helical segment. At 120 to 138 (YWRPVTSAPCLWSVSSAPW) the chain is on the perinuclear space side. Residues 139–169 (EIWFPLICFIVHFLCWAIICSILLIFDYPEL) traverse the membrane as a helical segment. Residues 170 to 196 (LGIKQVYYECLGLGDPLLLKSERAQRL) are Nuclear-facing. The helical transmembrane segment at 197–215 (YSHLRHPVCVELLTVLWLL) threads the bilayer. The Perinuclear space portion of the chain corresponds to 216 to 221 (PSFPLD). The helical transmembrane segment at 222–239 (RLLLAVFLTVYLILAHSL) threads the bilayer. The Nuclear segment spans residues 240-275 (DKQDCAYLRHQLRNKLQLFSTPLEGSEQTNDNNKLE).

The protein belongs to the nurim family.

The protein resides in the nucleus inner membrane. This chain is Nurim (nrm), found in Danio rerio (Zebrafish).